We begin with the raw amino-acid sequence, 714 residues long: Lipase maturation factor 2 (714 aa).

The next 9 membrane-spanning stretches (helical) occupy residues 11–31, 79–99, 103–125, 159–179, 221–241, 257–277, 304–324, 358–378, and 398–418; these read LFLA…YLQI, MELL…CAPL, LLFA…FLYF, SVTF…SGVV, FSVV…FMPI, ILII…VLAF, TLLS…LLYW, VTLP…LSAL, and AVFA…FTYI. The N-linked (GlcNAc...) asparagine glycan is linked to N483. A helical membrane pass occupies residues 629-649; it reads PFSPHVVLWSLYVVAATTCLL. Positions 654 to 669 are enriched in basic residues; it reads RRPRGGAPPTRHKAPK. The disordered stretch occupies residues 654–714; the sequence is RRPRGGAPPT…EGPRGTKRRK (61 aa). A compositionally biased stretch (basic and acidic residues) spans 683–708; that stretch reads RRKEGREAEERGEGRSRGAADGEGPR.

Belongs to the lipase maturation factor family.

It is found in the endoplasmic reticulum membrane. Involved in the maturation of specific proteins in the endoplasmic reticulum. May be required for maturation and transport of active lipoprotein lipase (LPL) through the secretory pathway. This Gallus gallus (Chicken) protein is Lipase maturation factor 2 (LMF2).